The sequence spans 479 residues: Sucrose-6-phosphate hydrolase (479 aa).

Residues 1-28 are disordered; the sequence is MTAHDQELRRRAYEEVEKKEPIANSDPH. Substrate is bound by residues 40 to 43, glutamine 59, 102 to 103, 161 to 162, and glutamate 220; these read LLND, YS, and RD. Aspartate 43 is an active-site residue.

This sequence belongs to the glycosyl hydrolase 32 family.

It catalyses the reaction Hydrolysis of terminal non-reducing beta-D-fructofuranoside residues in beta-D-fructofuranosides.. Its pathway is glycan biosynthesis; sucrose metabolism. This chain is Sucrose-6-phosphate hydrolase (sacA), found in Bacillus subtilis (strain 168).